The following is a 125-amino-acid chain: Fluoride-specific ion channel FluC (125 aa).

Transmembrane regions (helical) follow at residues 1-21 (MIQA…RYYV), 32-52 (AFPW…GVFA), 68-88 (LLIT…LDAI), and 101-121 (IYTV…LAVM). Positions 75 and 78 each coordinate Na(+).

It belongs to the fluoride channel Fluc/FEX (TC 1.A.43) family.

The protein resides in the cell inner membrane. The enzyme catalyses fluoride(in) = fluoride(out). Na(+) is not transported, but it plays an essential structural role and its presence is essential for fluoride channel function. In terms of biological role, fluoride-specific ion channel. Important for reducing fluoride concentration in the cell, thus reducing its toxicity. This is Fluoride-specific ion channel FluC from Rhizobium leguminosarum bv. trifolii (strain WSM2304).